Reading from the N-terminus, the 338-residue chain is Anthranilate phosphoribosyltransferase (338 aa).

Residues glycine 78, 81–82 (GD), threonine 86, 88–91 (NIST), 106–114 (KHGNRSVSS), and serine 118 each bind 5-phospho-alpha-D-ribose 1-diphosphate. Position 78 (glycine 78) interacts with anthranilate. Residue serine 90 coordinates Mg(2+). Asparagine 109 is a binding site for anthranilate. Arginine 164 is an anthranilate binding site. Mg(2+) contacts are provided by aspartate 223 and glutamate 224.

This sequence belongs to the anthranilate phosphoribosyltransferase family. Homodimer. Requires Mg(2+) as cofactor.

The enzyme catalyses N-(5-phospho-beta-D-ribosyl)anthranilate + diphosphate = 5-phospho-alpha-D-ribose 1-diphosphate + anthranilate. The protein operates within amino-acid biosynthesis; L-tryptophan biosynthesis; L-tryptophan from chorismate: step 2/5. In terms of biological role, catalyzes the transfer of the phosphoribosyl group of 5-phosphorylribose-1-pyrophosphate (PRPP) to anthranilate to yield N-(5'-phosphoribosyl)-anthranilate (PRA). The protein is Anthranilate phosphoribosyltransferase of Bacillus licheniformis (strain ATCC 14580 / DSM 13 / JCM 2505 / CCUG 7422 / NBRC 12200 / NCIMB 9375 / NCTC 10341 / NRRL NRS-1264 / Gibson 46).